The following is a 146-amino-acid chain: Large ribosomal subunit protein uL15 (146 aa).

A disordered region spans residues 1-58 (MNLSNLRAPKKANRNRKRVGRGMGSGHGKTSTRGHKGQRSRSGSRSMRGFEGGQMPLH). Basic residues-rich tracts occupy residues 8 to 20 (APKK…KRVG) and 30 to 39 (TSTRGHKGQR). Residues 40–49 (SRSGSRSMRG) show a composition bias toward low complexity.

The protein belongs to the universal ribosomal protein uL15 family. As to quaternary structure, part of the 50S ribosomal subunit.

Functionally, binds to the 23S rRNA. The polypeptide is Large ribosomal subunit protein uL15 (Acidobacterium capsulatum (strain ATCC 51196 / DSM 11244 / BCRC 80197 / JCM 7670 / NBRC 15755 / NCIMB 13165 / 161)).